The primary structure comprises 420 residues: Serine--tRNA ligase (420 aa).

228-230 (TAE) lines the L-serine pocket. 259 to 261 (RSE) provides a ligand contact to ATP. E282 is a binding site for L-serine. An ATP-binding site is contributed by 346 to 349 (EISS). S382 contacts L-serine.

The protein belongs to the class-II aminoacyl-tRNA synthetase family. Type-1 seryl-tRNA synthetase subfamily. In terms of assembly, homodimer. The tRNA molecule binds across the dimer.

Its subcellular location is the cytoplasm. The catalysed reaction is tRNA(Ser) + L-serine + ATP = L-seryl-tRNA(Ser) + AMP + diphosphate + H(+). It carries out the reaction tRNA(Sec) + L-serine + ATP = L-seryl-tRNA(Sec) + AMP + diphosphate + H(+). Its pathway is aminoacyl-tRNA biosynthesis; selenocysteinyl-tRNA(Sec) biosynthesis; L-seryl-tRNA(Sec) from L-serine and tRNA(Sec): step 1/1. In terms of biological role, catalyzes the attachment of serine to tRNA(Ser). Is also able to aminoacylate tRNA(Sec) with serine, to form the misacylated tRNA L-seryl-tRNA(Sec), which will be further converted into selenocysteinyl-tRNA(Sec). This chain is Serine--tRNA ligase, found in Mycoplasmoides gallisepticum (strain R(low / passage 15 / clone 2)) (Mycoplasma gallisepticum).